A 424-amino-acid polypeptide reads, in one-letter code: Serine hydroxymethyltransferase (424 aa).

Residues leucine 118 and 122 to 124 (GHL) contribute to the (6S)-5,6,7,8-tetrahydrofolate site. Lysine 227 is modified (N6-(pyridoxal phosphate)lysine). 351–353 (SPF) is a binding site for (6S)-5,6,7,8-tetrahydrofolate.

The protein belongs to the SHMT family. Homodimer. Requires pyridoxal 5'-phosphate as cofactor.

The protein resides in the cytoplasm. The catalysed reaction is (6R)-5,10-methylene-5,6,7,8-tetrahydrofolate + glycine + H2O = (6S)-5,6,7,8-tetrahydrofolate + L-serine. It participates in one-carbon metabolism; tetrahydrofolate interconversion. It functions in the pathway amino-acid biosynthesis; glycine biosynthesis; glycine from L-serine: step 1/1. Functionally, catalyzes the reversible interconversion of serine and glycine with tetrahydrofolate (THF) serving as the one-carbon carrier. This reaction serves as the major source of one-carbon groups required for the biosynthesis of purines, thymidylate, methionine, and other important biomolecules. Also exhibits THF-independent aldolase activity toward beta-hydroxyamino acids, producing glycine and aldehydes, via a retro-aldol mechanism. The sequence is that of Serine hydroxymethyltransferase from Thermosipho melanesiensis (strain DSM 12029 / CIP 104789 / BI429).